Reading from the N-terminus, the 115-residue chain is Probable prefoldin subunit 1 (115 aa).

This sequence belongs to the prefoldin subunit beta family. In terms of assembly, heterohexamer of two PFD-alpha type and four PFD-beta type subunits.

Its function is as follows. Binds specifically to cytosolic chaperonin (c-CPN) and transfers target proteins to it. Binds to nascent polypeptide chain and promotes folding in an environment in which there are many competing pathways for nonnative proteins. This is Probable prefoldin subunit 1 (pfdn1) from Dictyostelium discoideum (Social amoeba).